Reading from the N-terminus, the 262-residue chain is MNILVVKTPEELAEAGYKLIEEVVKTKENPTLGMATGSSPLGIYAEMRKNKLDTSRVTTVNLDEYVNLPHEDKNSYHYFMQEQLFDHLPFKQTYVPNGMASDLEEECKRYESILAANPVDLQILGIGENGHIGFNEPGTPFNSPTNIVELTESTRQANLRFFEKEEDVPTHAITMGIGSIMKAKQVLLVAMGSKKAEAVKELLQGEYSEECPATVLQRHPNVTVIADQEALSLCSEAIADEHRQVFTISDLLSDSRVGETAN.

D63 serves as the catalytic Proton acceptor; for enolization step. The active-site For ring-opening step is N129. H131 (proton acceptor; for ring-opening step) is an active-site residue. The For ring-opening step role is filled by E136.

This sequence belongs to the glucosamine/galactosamine-6-phosphate isomerase family. NagB subfamily.

The catalysed reaction is alpha-D-glucosamine 6-phosphate + H2O = beta-D-fructose 6-phosphate + NH4(+). It participates in amino-sugar metabolism; N-acetylneuraminate degradation; D-fructose 6-phosphate from N-acetylneuraminate: step 5/5. In terms of biological role, catalyzes the reversible isomerization-deamination of glucosamine 6-phosphate (GlcN6P) to form fructose 6-phosphate (Fru6P) and ammonium ion. This is Glucosamine-6-phosphate deaminase from Bacillus cereus (strain B4264).